We begin with the raw amino-acid sequence, 248 residues long: Probable transcriptional regulatory protein SO_2432 (248 aa).

The protein belongs to the TACO1 family.

Its subcellular location is the cytoplasm. This chain is Probable transcriptional regulatory protein SO_2432, found in Shewanella oneidensis (strain ATCC 700550 / JCM 31522 / CIP 106686 / LMG 19005 / NCIMB 14063 / MR-1).